The chain runs to 177 residues: Peptide methionine sulfoxide reductase MsrA 2 (177 aa).

C12 is an active-site residue.

This sequence belongs to the MsrA Met sulfoxide reductase family.

It carries out the reaction L-methionyl-[protein] + [thioredoxin]-disulfide + H2O = L-methionyl-(S)-S-oxide-[protein] + [thioredoxin]-dithiol. The enzyme catalyses [thioredoxin]-disulfide + L-methionine + H2O = L-methionine (S)-S-oxide + [thioredoxin]-dithiol. In terms of biological role, has an important function as a repair enzyme for proteins that have been inactivated by oxidation. Catalyzes the reversible oxidation-reduction of methionine sulfoxide in proteins to methionine. The chain is Peptide methionine sulfoxide reductase MsrA 2 from Staphylococcus aureus (strain MRSA252).